Here is a 264-residue protein sequence, read N- to C-terminus: Thiazole synthase (264 aa).

Lys-101 functions as the Schiff-base intermediate with DXP in the catalytic mechanism. Residues Gly-162, 189 to 190 (AG), and 211 to 212 (NT) contribute to the 1-deoxy-D-xylulose 5-phosphate site. The segment at 245–264 (KRQTASPSTPTLGQPFWHNQ) is disordered.

It belongs to the ThiG family. As to quaternary structure, homotetramer. Forms heterodimers with either ThiH or ThiS.

It is found in the cytoplasm. The catalysed reaction is [ThiS sulfur-carrier protein]-C-terminal-Gly-aminoethanethioate + 2-iminoacetate + 1-deoxy-D-xylulose 5-phosphate = [ThiS sulfur-carrier protein]-C-terminal Gly-Gly + 2-[(2R,5Z)-2-carboxy-4-methylthiazol-5(2H)-ylidene]ethyl phosphate + 2 H2O + H(+). The protein operates within cofactor biosynthesis; thiamine diphosphate biosynthesis. In terms of biological role, catalyzes the rearrangement of 1-deoxy-D-xylulose 5-phosphate (DXP) to produce the thiazole phosphate moiety of thiamine. Sulfur is provided by the thiocarboxylate moiety of the carrier protein ThiS. In vitro, sulfur can be provided by H(2)S. The chain is Thiazole synthase from Cellvibrio japonicus (strain Ueda107) (Pseudomonas fluorescens subsp. cellulosa).